The sequence spans 901 residues: Protein translocase subunit SecA (901 aa).

ATP is bound by residues Q87, 105 to 109, and D512; that span reads GEGKT. Residues 853–901 form a disordered region; sequence QMQQLSHQTDENEAAEAIAAQTGDRKVGRNDPCPCGSGKKYKSCHGRLS. Residues C885, C887, C896, and H897 each coordinate Zn(2+). The span at 891–901 shows a compositional bias: basic residues; sequence KKYKSCHGRLS.

This sequence belongs to the SecA family. As to quaternary structure, monomer and homodimer. Part of the essential Sec protein translocation apparatus which comprises SecA, SecYEG and auxiliary proteins SecDF-YajC and YidC. It depends on Zn(2+) as a cofactor.

The protein resides in the cell inner membrane. Its subcellular location is the cytoplasm. It catalyses the reaction ATP + H2O + cellular proteinSide 1 = ADP + phosphate + cellular proteinSide 2.. Part of the Sec protein translocase complex. Interacts with the SecYEG preprotein conducting channel. Has a central role in coupling the hydrolysis of ATP to the transfer of proteins into and across the cell membrane, serving both as a receptor for the preprotein-SecB complex and as an ATP-driven molecular motor driving the stepwise translocation of polypeptide chains across the membrane. The chain is Protein translocase subunit SecA from Enterobacter sp. (strain 638).